Here is a 230-residue protein sequence, read N- to C-terminus: TorCAD operon transcriptional regulatory protein TorR (230 aa).

In terms of domain architecture, Response regulatory spans 4–117 (HIVIVEDEPV…ELVVRVKNLL (114 aa)). Aspartate 53 bears the 4-aspartylphosphate mark. The segment at residues 132–227 (DNCYRFAGYC…QHGEGYFLAA (96 aa)) is a DNA-binding region (ompR/PhoB-type).

Interacts with TorI. TorI binds to the effector domain of TorR. This interaction, which does not interfere with TorR DNA binding activity, probably prevents the recruitment of RNA polymerase to the torCAD promoter. In terms of processing, phosphorylated and dephosphorylated by TorS.

Its subcellular location is the cytoplasm. Member of the two-component regulatory system TorS/TorR involved in the anaerobic utilization of trimethylamine-N-oxide (TMAO). Phosphorylated TorR activates the transcription of the torCAD operon by binding to four decameric boxes located in the torCAD promoter. Box1, 2 and 4 contain the DNA sequence 5'-CTGTTCATAT-3' and box3 contains the DNA sequence 5'-CCGTTCATCC-3'. Phosphorylated as well as unphosphorylated TorR negatively regulates its own expression by binding to box1 and 2. In Escherichia coli (strain K12), this protein is TorCAD operon transcriptional regulatory protein TorR (torR).